The chain runs to 447 residues: Kynurenine 3-monooxygenase (447 aa).

The protein belongs to the aromatic-ring hydroxylase family. KMO subfamily. Requires FAD as cofactor.

The catalysed reaction is L-kynurenine + NADPH + O2 + H(+) = 3-hydroxy-L-kynurenine + NADP(+) + H2O. It participates in cofactor biosynthesis; NAD(+) biosynthesis; quinolinate from L-kynurenine: step 1/3. In terms of biological role, catalyzes the hydroxylation of L-kynurenine (L-Kyn) to form 3-hydroxy-L-kynurenine (L-3OHKyn). Required for synthesis of quinolinic acid. The chain is Kynurenine 3-monooxygenase from Flavobacterium psychrophilum (strain ATCC 49511 / DSM 21280 / CIP 103535 / JIP02/86).